Consider the following 187-residue polypeptide: UPF0200 protein PYRAB09750 (187 aa).

7-14 serves as a coordination point for ATP; sequence GMPGSGKG.

This sequence belongs to the UPF0200 family.

This Pyrococcus abyssi (strain GE5 / Orsay) protein is UPF0200 protein PYRAB09750.